We begin with the raw amino-acid sequence, 74 residues long: ATP synthase F(1) complex subunit epsilon, mitochondrial (74 aa).

Belongs to the eukaryotic ATPase epsilon family. In terms of assembly, component of the ATP synthase complex composed at least of ATP5F1A/subunit alpha, ATP5F1B/subunit beta, ATP5MC1/subunit c (homooctomer), MT-ATP6/subunit a, MT-ATP8/subunit 8, ATP5ME/subunit e, ATP5MF/subunit f, ATP5MG/subunit g, ATP5MK/subunit k, ATP5MJ/subunit j, ATP5F1C/subunit gamma, ATP5F1D/subunit delta, ATP5F1E/subunit epsilon, ATP5PF/subunit F6, ATP5PB/subunit b, ATP5PD/subunit d, ATP5PO/subunit OSCP. ATP synthase complex consists of a soluble F(1) head domain (subunits alpha(3) and beta(3)) - the catalytic core - and a membrane F(0) domain - the membrane proton channel (subunits c, a, 8, e, f, g, k and j). These two domains are linked by a central stalk (subunits gamma, delta, and epsilon) rotating inside the F1 region and a stationary peripheral stalk (subunits F6, b, d, and OSCP).

It is found in the mitochondrion. The protein resides in the mitochondrion inner membrane. In terms of biological role, subunit epsilon, of the mitochondrial membrane ATP synthase complex (F(1)F(0) ATP synthase or Complex V) that produces ATP from ADP in the presence of a proton gradient across the membrane which is generated by electron transport complexes of the respiratory chain. ATP synthase complex consist of a soluble F(1) head domain - the catalytic core - and a membrane F(1) domain - the membrane proton channel. These two domains are linked by a central stalk rotating inside the F(1) region and a stationary peripheral stalk. During catalysis, ATP synthesis in the catalytic domain of F(1) is coupled via a rotary mechanism of the central stalk subunits to proton translocation. In vivo, can only synthesize ATP although its ATP hydrolase activity can be activated artificially in vitro. May be essential for the assembly of F(1) and may play an important role in the incorporation of the hydrophobic subunit c into the F(1)-c oligomer rotor of the mitochondrial ATP synthase complex. This chain is ATP synthase F(1) complex subunit epsilon, mitochondrial, found in Dictyostelium discoideum (Social amoeba).